Consider the following 468-residue polypeptide: Uronate isomerase (468 aa).

This sequence belongs to the metallo-dependent hydrolases superfamily. Uronate isomerase family.

The enzyme catalyses D-glucuronate = D-fructuronate. It catalyses the reaction aldehydo-D-galacturonate = keto-D-tagaturonate. Its pathway is carbohydrate metabolism; pentose and glucuronate interconversion. The sequence is that of Uronate isomerase from Phocaeicola vulgatus (strain ATCC 8482 / DSM 1447 / JCM 5826 / CCUG 4940 / NBRC 14291 / NCTC 11154) (Bacteroides vulgatus).